Here is a 239-residue protein sequence, read N- to C-terminus: Major prion protein (239 aa).

The signal sequence occupies residues 1–15; sequence MLVLFVATWSDLGLC. Positions 15–98 are disordered; the sequence is CKKRPKPGGW…NQWNKPSKPK (84 aa). The segment at 16-31 is interaction with ADGRG6; it reads KKRPKPGGWNTGGSRY. The segment at 16-222 is interaction with GRB2, ERI3 and SYN1; the sequence is KKRPKPGGWN…ESQAYYQRGS (207 aa). 5 repeat units span residues 44 to 51, 52 to 59, 60 to 67, 68 to 75, and 76 to 83. The 5 X 8 AA tandem repeats of P-H-G-G-G-W-G-Q stretch occupies residues 44–83; it reads PQSGGWGQPHGGGWGQPHGGGWGQPHGGGWGQPHGGGWGQ. Positions 47–87 are enriched in gly residues; it reads GGWGQPHGGGWGQPHGGGWGQPHGGGWGQPHGGGWGQGGGT. Residues histidine 53, glycine 54, glycine 55, histidine 61, glycine 62, glycine 63, histidine 69, glycine 70, glycine 71, histidine 77, glycine 78, and glycine 79 each coordinate Cu(2+). A disulfide bridge links cysteine 171 with cysteine 206. Asparagine 173 and asparagine 189 each carry an N-linked (GlcNAc...) asparagine glycan. Serine 222 carries GPI-anchor amidated serine lipidation. Positions 223–239 are cleaved as a propeptide — removed in mature form; it reads SMVLFSSPPVILLISFL.

Belongs to the prion family. Monomer and homodimer. Has a tendency to aggregate into amyloid fibrils containing a cross-beta spine, formed by a steric zipper of superposed beta-strands. Soluble oligomers may represent an intermediate stage on the path to fibril formation. Copper binding may promote oligomerization. Interacts with GRB2, APP, ERI3/PRNPIP and SYN1. Mislocalized cytosolically exposed PrP interacts with MGRN1; this interaction alters MGRN1 subcellular location and causes lysosomal enlargement. Interacts with APP. Interacts with KIAA1191. Interacts with ADGRG6.

It localises to the cell membrane. The protein resides in the golgi apparatus. Functionally, its primary physiological function is unclear. May play a role in neuronal development and synaptic plasticity. May be required for neuronal myelin sheath maintenance. May promote myelin homeostasis through acting as an agonist for ADGRG6 receptor. May play a role in iron uptake and iron homeostasis. Soluble oligomers are toxic to cultured neuroblastoma cells and induce apoptosis (in vitro). Association with GPC1 (via its heparan sulfate chains) targets PRNP to lipid rafts. Also provides Cu(2+) or Zn(2+) for the ascorbate-mediated GPC1 deaminase degradation of its heparan sulfate side chains. This is Major prion protein (PRNP) from Aotus trivirgatus (Three-striped night monkey).